We begin with the raw amino-acid sequence, 313 residues long: Cytochrome f (313 aa).

An N-terminal signal peptide occupies residues 1-30; sequence MRNWSFSKAALTVSLLALSWSPFGPAEVQA. The heme site is built by Y31, C51, C54, and H55. A helical membrane pass occupies residues 279 to 298; that stretch reads VQGLIIFFAFVLIAQVFLVL.

The protein belongs to the cytochrome f family. As to quaternary structure, the 4 large subunits of the cytochrome b6-f complex are cytochrome b6, subunit IV (17 kDa polypeptide, petD), cytochrome f and the Rieske protein, while the 4 small subunits are PetG, PetL, PetM and PetN. The complex functions as a dimer. It depends on heme as a cofactor.

Its subcellular location is the plastid. The protein localises to the chloroplast thylakoid membrane. Component of the cytochrome b6-f complex, which mediates electron transfer between photosystem II (PSII) and photosystem I (PSI), cyclic electron flow around PSI, and state transitions. This Nephroselmis olivacea (Green alga) protein is Cytochrome f.